The chain runs to 116 residues: Ribonuclease P protein component (116 aa).

The protein belongs to the RnpA family. As to quaternary structure, consists of a catalytic RNA component (M1 or rnpB) and a protein subunit.

The enzyme catalyses Endonucleolytic cleavage of RNA, removing 5'-extranucleotides from tRNA precursor.. In terms of biological role, RNaseP catalyzes the removal of the 5'-leader sequence from pre-tRNA to produce the mature 5'-terminus. It can also cleave other RNA substrates such as 4.5S RNA. The protein component plays an auxiliary but essential role in vivo by binding to the 5'-leader sequence and broadening the substrate specificity of the ribozyme. The protein is Ribonuclease P protein component of Picosynechococcus sp. (strain ATCC 27264 / PCC 7002 / PR-6) (Agmenellum quadruplicatum).